The primary structure comprises 290 residues: ATP synthase gamma chain (290 aa).

The protein belongs to the ATPase gamma chain family. In terms of assembly, F-type ATPases have 2 components, CF(1) - the catalytic core - and CF(0) - the membrane proton channel. CF(1) has five subunits: alpha(3), beta(3), gamma(1), delta(1), epsilon(1). CF(0) has three main subunits: a, b and c.

The protein localises to the cell inner membrane. Functionally, produces ATP from ADP in the presence of a proton gradient across the membrane. The gamma chain is believed to be important in regulating ATPase activity and the flow of protons through the CF(0) complex. This Dictyoglomus turgidum (strain DSM 6724 / Z-1310) protein is ATP synthase gamma chain.